Here is a 1342-residue protein sequence, read N- to C-terminus: DNA-directed RNA polymerase subunit beta (1342 aa).

Belongs to the RNA polymerase beta chain family. The RNAP catalytic core consists of 2 alpha, 1 beta, 1 beta' and 1 omega subunit. When a sigma factor is associated with the core the holoenzyme is formed, which can initiate transcription.

The enzyme catalyses RNA(n) + a ribonucleoside 5'-triphosphate = RNA(n+1) + diphosphate. DNA-dependent RNA polymerase catalyzes the transcription of DNA into RNA using the four ribonucleoside triphosphates as substrates. The chain is DNA-directed RNA polymerase subunit beta from Photorhabdus laumondii subsp. laumondii (strain DSM 15139 / CIP 105565 / TT01) (Photorhabdus luminescens subsp. laumondii).